Reading from the N-terminus, the 1683-residue chain is Phospholipase D1 (1683 aa).

4 disordered regions span residues 1 to 150 (MSNV…AYTQ), 173 to 198 (LKSSVNSPTPAGSGHRHNQHQHQQVN), 259 to 289 (ILDITNSNHNHRGNNNNNTGENSDRRPSIPR), and 384 to 416 (VMEKKAENKPSSAASAPHTSENNNNDNGSNITS). S2 carries the post-translational modification N-acetylserine. S8 and S30 each carry phosphoserine. 3 stretches are compositionally biased toward basic and acidic residues: residues 20-34 (SVTEEVDRVNSRPDE), 63-82 (NGKEAERKHALPKSFVDRNL), and 90-112 (SLDHIMHSNEHDPRRGSDEENMH). Residues 116–125 (NNLHSSNNNV) are compositionally biased toward low complexity. Polar residues predominate over residues 141 to 150 (RRSSSVAYTQ). S145 bears the Phosphoserine mark. Residues 263–279 (TNSNHNHRGNNNNNTGE) are compositionally biased toward low complexity. Positions 291–487 (SSIISISSNV…EFYELSPLGN (197 aa)) constitute a PX domain. The span at 392–404 (KPSSAASAPHTSE) shows a compositional bias: polar residues. Residues 405–416 (NNNNDNGSNITS) show a composition bias toward low complexity. Positions 496–664 (QGKQGYLVIR…SSIIKMSTST (169 aa)) constitute a PH domain. PLD phosphodiesterase domains follow at residues 791–818 (YFWAHHEKFVVIDETFAFIGGTDLCYGR) and 1091–1118 (EQLYVHAKILIADDRRCIIGSANINERS). Catalysis depends on residues H796, K798, D803, H1096, K1098, and D1103. The interval 1430-1465 (KDMRRHLSSSTESTRNGSNSLPLNEKSNEGESTNVD) is disordered. Residues 1437 to 1451 (SSSTESTRNGSNSLP) are compositionally biased toward polar residues. The residue at position 1461 (S1461) is a Phosphoserine. T1462 bears the Phosphothreonine mark.

The protein belongs to the phospholipase D family. In terms of assembly, interacts with SRF1.

The enzyme catalyses a 1,2-diacyl-sn-glycero-3-phosphocholine + H2O = a 1,2-diacyl-sn-glycero-3-phosphate + choline + H(+). Activity is dependent of phosphatidylinositol 4,5-bisphosphate and the regulator SRF1. Inhibited by magnesium. Required for meiosis and spore formation. Seems to be involved in the coordinate induction of late meiotic events. PLD activity is induced under sporulation conditions and seems to be necessary to complete the meiotic cycle, but not for vegetative cell growth. This chain is Phospholipase D1 (SPO14), found in Saccharomyces cerevisiae (strain ATCC 204508 / S288c) (Baker's yeast).